A 677-amino-acid chain; its full sequence is Sulfate transporter 2.1 (677 aa).

The Cytoplasmic portion of the chain corresponds to 1-118; the sequence is MKERDSESFE…NYKLTMFKND (118 aa). Positions 23–54 are disordered; the sequence is STHMIQMAMANSGSSAAAQAGQDQPDRSKWLL. Residues 28–44 show a composition bias toward low complexity; that stretch reads QMAMANSGSSAAAQAGQ. Residues 119-139 traverse the membrane as a helical segment; sequence LMAGLTLASLCIPQSIGYATL. Residues 140–141 are Extracellular-facing; it reads AK. The helical transmembrane segment at 142-162 threads the bilayer; it reads LDPQYGLYTSVVPPLIYALMG. Topologically, residues 163–166 are cytoplasmic; that stretch reads TSRE. Residues 167–187 form a helical membrane-spanning segment; it reads IAIGPVAVVSLLISSMLQKLI. The Extracellular portion of the chain corresponds to 188-198; that stretch reads DPETDPLGYKK. Residues 199–219 form a helical membrane-spanning segment; that stretch reads LVLTTTFFAGIFQASFGLFRL. At 220-221 the chain is on the cytoplasmic side; the sequence is GF. The chain crosses the membrane as a helical span at residues 222–242; sequence LVDFLSHAAIVGFMGGAAIVI. Over 243 to 278 the chain is Extracellular; sequence GLQQLKGLLGITNFTTNTDIVSVLRAVWRSCQQQWS. A glycan (N-linked (GlcNAc...) asparagine) is linked at Asn255. Residues 279 to 299 traverse the membrane as a helical segment; that stretch reads PHTFILGCSFLSFILITRFIG. Residues 300 to 304 lie on the Cytoplasmic side of the membrane; it reads KKYKK. A helical transmembrane segment spans residues 305 to 325; that stretch reads LFWLPAIAPLIAVVVSTLMVF. The Extracellular segment spans residues 326 to 360; it reads LTKADEHGVKTVRHIKGGLNPMSIQDLDFNTPHLG. The helical transmembrane segment at 361–381 threads the bilayer; that stretch reads QIAKIGLIIAIVALTEAIAVG. Residues 382-397 are Cytoplasmic-facing; sequence RSFAGIKGYRLDGNKE. Residues 398–418 form a helical membrane-spanning segment; that stretch reads MVAIGFMNVLGSFTSCYAATG. The Extracellular portion of the chain corresponds to 419-426; that stretch reads SFSRTAVN. The chain crosses the membrane as a helical span at residues 427–447; sequence FAAGCETAMSNIVMAVTVFVA. Residues 448 to 454 lie on the Cytoplasmic side of the membrane; the sequence is LECLTRL. The helical transmembrane segment at 455 to 475 threads the bilayer; the sequence is LYYTPIAILASIILSALPGLI. The Extracellular segment spans residues 476–490; sequence NINEAIHIWKVDKFD. A helical transmembrane segment spans residues 491-511; it reads FLALIGAFFGVLFASVEIGLL. Topologically, residues 512-677 are cytoplasmic; sequence VAVVISFAKI…ALDACFGLKV (166 aa). One can recognise an STAS domain in the interval 548–672; sequence YPMTVKTPGV…LTIGEALDAC (125 aa).

The protein belongs to the SLC26A/SulP transporter (TC 2.A.53) family. In terms of tissue distribution, expressed in root cap, central cylinder of roots and in vascular tissues of leaves.

It is found in the membrane. In terms of biological role, low-affinity H(+)/sulfate cotransporter that may be involved in root-to-shoot translocation of sulfate. Plays a central role in the regulation of sulfate assimilation. This Arabidopsis thaliana (Mouse-ear cress) protein is Sulfate transporter 2.1 (SULTR2;1).